The following is a 325-amino-acid chain: MQTSLLKPKIIAVESLGENHAKVVMEPFERGYGHTLGNALRRVLLSSMVGYAPTEVTIAGVVHEYSTLDGVQEDVVNLLLNLKGVVFKLHNRDEVTVTLRKEGEGVVTAGDIELAHDCEVINPNHVIAHLSKGGKLDVQIKVEKGRGYVPGNVRRYGDETAKIIGRIVLDASFSPVRRVSYTVESARVEQRTDLDKLVMNIETSGVITPEEAIRQSARILVDQLSVFAALEGTETAAEAPSRAPQIDPILLRPVDDLELTVRSANCLKAENIYYIGDLIQRTENELLKTPNLGRKSLNEIKEVLASRGLTLGMKLENWPPAGLDK.

Positions 1-231 (MQTSLLKPKI…DQLSVFAALE (231 aa)) are alpha N-terminal domain (alpha-NTD). Residues 246-325 (IDPILLRPVD…ENWPPAGLDK (80 aa)) are alpha C-terminal domain (alpha-CTD).

This sequence belongs to the RNA polymerase alpha chain family. In terms of assembly, homodimer. The RNAP catalytic core consists of 2 alpha, 1 beta, 1 beta' and 1 omega subunit. When a sigma factor is associated with the core the holoenzyme is formed, which can initiate transcription.

The enzyme catalyses RNA(n) + a ribonucleoside 5'-triphosphate = RNA(n+1) + diphosphate. DNA-dependent RNA polymerase catalyzes the transcription of DNA into RNA using the four ribonucleoside triphosphates as substrates. In Burkholderia mallei (strain NCTC 10247), this protein is DNA-directed RNA polymerase subunit alpha.